A 186-amino-acid chain; its full sequence is Elongation factor P (186 aa).

It belongs to the elongation factor P family.

It localises to the cytoplasm. Its pathway is protein biosynthesis; polypeptide chain elongation. Its function is as follows. Involved in peptide bond synthesis. Stimulates efficient translation and peptide-bond synthesis on native or reconstituted 70S ribosomes in vitro. Probably functions indirectly by altering the affinity of the ribosome for aminoacyl-tRNA, thus increasing their reactivity as acceptors for peptidyl transferase. The sequence is that of Elongation factor P from Streptococcus sanguinis (strain SK36).